Reading from the N-terminus, the 339-residue chain is Small ribosomal subunit biogenesis GTPase RsgA (339 aa).

One can recognise a CP-type G domain in the interval 111–271 (MRGLLKPVAA…LIDSPGIREF (161 aa)). GTP is bound by residues 159–162 (NKAD) and 213–221 (GQSGVGKSS). Zn(2+) contacts are provided by Cys-295, Cys-300, His-302, and Cys-308.

Belongs to the TRAFAC class YlqF/YawG GTPase family. RsgA subfamily. As to quaternary structure, monomer. Associates with 30S ribosomal subunit, binds 16S rRNA. The cofactor is Zn(2+).

The protein localises to the cytoplasm. Its function is as follows. One of several proteins that assist in the late maturation steps of the functional core of the 30S ribosomal subunit. Helps release RbfA from mature subunits. May play a role in the assembly of ribosomal proteins into the subunit. Circularly permuted GTPase that catalyzes slow GTP hydrolysis, GTPase activity is stimulated by the 30S ribosomal subunit. This chain is Small ribosomal subunit biogenesis GTPase RsgA, found in Pseudomonas aeruginosa (strain LESB58).